Consider the following 280-residue polypeptide: Putative protein-tyrosine sulfotransferase (280 aa).

16 to 20 (RSGTT) is a 3'-phosphoadenylyl sulfate binding site. A disulfide bond links C34 and C89. Catalysis depends on E37, which acts as the Proton donor/acceptor. N57 is a glycosylation site (N-linked (GlcNAc...) asparagine). 3'-phosphoadenylyl sulfate is bound by residues R116, S124, and R128. The N-linked (GlcNAc...) asparagine glycan is linked to N136. A disulfide bond links C158 and C165. 3'-phosphoadenylyl sulfate contacts are provided by residues Y170 and 215 to 224 (SASQVKNSIN).

Belongs to the protein sulfotransferase family.

The catalysed reaction is L-tyrosyl-[protein] + 3'-phosphoadenylyl sulfate = O-sulfo-L-tyrosine-[protein] + adenosine 3',5'-bisphosphate + H(+). Its function is as follows. Catalyzes the O-sulfation of tyrosine residues within acidic motifs of polypeptides, using 3'-phosphoadenylyl sulfate (PAPS) as cosubstrate. This Caenorhabditis briggsae protein is Putative protein-tyrosine sulfotransferase.